The primary structure comprises 370 residues: Queuine tRNA-ribosyltransferase (370 aa).

The Proton acceptor role is filled by Asp89. Substrate is bound by residues 89–93, Asp143, and Gly214; that span reads DSGGF. Residues 245–251 form an RNA binding region; it reads GVGKPED. Catalysis depends on Asp264, which acts as the Nucleophile. Residues 269–273 are RNA binding; important for wobble base 34 recognition; the sequence is TRNAR. Positions 302, 304, 307, and 333 each coordinate Zn(2+).

The protein belongs to the queuine tRNA-ribosyltransferase family. As to quaternary structure, homodimer. Within each dimer, one monomer is responsible for RNA recognition and catalysis, while the other monomer binds to the replacement base PreQ1. It depends on Zn(2+) as a cofactor.

It carries out the reaction 7-aminomethyl-7-carbaguanine + guanosine(34) in tRNA = 7-aminomethyl-7-carbaguanosine(34) in tRNA + guanine. It participates in tRNA modification; tRNA-queuosine biosynthesis. Functionally, catalyzes the base-exchange of a guanine (G) residue with the queuine precursor 7-aminomethyl-7-deazaguanine (PreQ1) at position 34 (anticodon wobble position) in tRNAs with GU(N) anticodons (tRNA-Asp, -Asn, -His and -Tyr). Catalysis occurs through a double-displacement mechanism. The nucleophile active site attacks the C1' of nucleotide 34 to detach the guanine base from the RNA, forming a covalent enzyme-RNA intermediate. The proton acceptor active site deprotonates the incoming PreQ1, allowing a nucleophilic attack on the C1' of the ribose to form the product. After dissociation, two additional enzymatic reactions on the tRNA convert PreQ1 to queuine (Q), resulting in the hypermodified nucleoside queuosine (7-(((4,5-cis-dihydroxy-2-cyclopenten-1-yl)amino)methyl)-7-deazaguanosine). This Buchnera aphidicola subsp. Acyrthosiphon pisum (strain APS) (Acyrthosiphon pisum symbiotic bacterium) protein is Queuine tRNA-ribosyltransferase.